A 797-amino-acid chain; its full sequence is MHIISAIYSARVQNCAAPTQPLVPSCQTHSAASHTPPGPSARLPSPARPEASTRTQGKSHAGAAAAAVEGTAAPEDEAADNSSEEDAGPGSHGEGAGEGGGSGTWPGNGGGPQPIHRCAGSVVAGATRGGCVAATRLYLAAVQPSGGLSICANTKPRAGPDPGSDSSEDERPNRNTVGNVPLVWYKDEEHIGYDIEGARITKAQRKDRLQQLLDRNDSKKALRTIYDPYNDEEVTLSKEELAMVMRIRAGQFPHLEVNPHETEHTWFTDPRDAEVMPIVDRPEPKSRFVPSKWEEQKIVKLVRAIRKGWIKKTPEQEEEERAAGPPAYLLWADDGLTDEAAAKAGSGLTYIPAPKLQLPGHADSYNPPAEYLPTEEEVAAWQMADPEDRPKALPQAFTSLRAVPAYTDFIKERFERCLDLYLCPRVRRKRLDIKSPEQLVPQLPKPRDLQPFPTTLALAYEGHMGPVASIAPDPWTGQWLLSGGQDGTLRLWEVRTGRCWRTWVLEGPVSAVAWCPQAGLRLVSAAVGNCVVLLPSGTGPEEAEEAAAEALRVRGPGRGGGRWVRGGPEEASSSGAGLAVRLRFPVRSLAWHGRGDYFASVAPTGNTQAVVVHQLSKRASQNPFRKNRGRVVRVAFHPTKPFFFVATQNHVRVYNLAKQALAKKLLGGGGVLSCLALHPGGDHVLVGSDDKRVAWYDLDLSTKPYKALRYHSAPPRAVAFHRSYPLFASAADDGTVQVFHGMVYADLLTNPLIVPVKILRGGHTVTASEGVADCAFHPTQPWIFTAGADSKILLYCN.

Disordered regions lie at residues 22–112 (LVPS…GGGP) and 149–177 (SICA…RNTV). The span at 61-73 (AGAAAAAVEGTAA) shows a compositional bias: low complexity. Positions 74-87 (PEDEAADNSSEEDA) are enriched in acidic residues. Over residues 90 to 112 (GSHGEGAGEGGGSGTWPGNGGGP) the composition is skewed to gly residues. WD repeat units lie at residues 462–502 (GHMG…CWRT), 504–544 (VLEG…EEAE), 581–623 (RLRF…SQNP), 626–664 (KNRG…LAKK), 667–706 (GGGG…KPYK), 710–749 (YHSA…DLLT), and 766–797 (TASE…LYCN).

The protein belongs to the WD repeat BOP1/ERB1 family.

Its subcellular location is the nucleus. It localises to the nucleolus. The protein resides in the nucleoplasm. Its function is as follows. Required for maturation of ribosomal RNAs and formation of the large ribosomal subunit. This chain is Ribosome biogenesis protein BOP1 homolog, found in Chlamydomonas reinhardtii (Chlamydomonas smithii).